A 503-amino-acid polypeptide reads, in one-letter code: Cytochrome c lysine N-methyltransferase 1 (503 aa).

One can recognise an SET domain in the interval Ser52–Ala276. Residues Asn190 to Leu291 are SET-like.

It belongs to the class V-like SAM-binding methyltransferase superfamily.

The protein localises to the cytoplasm. It is found in the cytosol. The enzyme catalyses L-lysyl-[cytochrome c] + S-adenosyl-L-methionine = N(6)-methyl-L-lysyl-[cytochrome c] + S-adenosyl-L-homocysteine + H(+). Its function is as follows. Methyltransferase which mediates trimethylation of cytochrome c (CYC1). The polypeptide is Cytochrome c lysine N-methyltransferase 1 (CTM1) (Kluyveromyces lactis (strain ATCC 8585 / CBS 2359 / DSM 70799 / NBRC 1267 / NRRL Y-1140 / WM37) (Yeast)).